The chain runs to 150 residues: Arginine repressor (150 aa).

This sequence belongs to the ArgR family.

The protein localises to the cytoplasm. Its pathway is amino-acid biosynthesis; L-arginine biosynthesis [regulation]. Functionally, regulates arginine biosynthesis genes. In Clostridium botulinum (strain 657 / Type Ba4), this protein is Arginine repressor.